A 286-amino-acid polypeptide reads, in one-letter code: Putative sensory transducer protein YfmS (286 aa).

The Methyl-accepting transducer domain maps to 68–286 (ITDAIRSNQK…KMAEKALEEE (219 aa)).

This sequence belongs to the methyl-accepting chemotaxis (MCP) protein family.

Its function is as follows. Chemotactic-signal transducers respond to changes in the concentration of attractants and repellents in the environment, transduce a signal from the outside to the inside of the cell, and facilitate sensory adaptation through the variation of the level of methylation. Attractants increase the level of methylation while repellents decrease the level of methylation. The chain is Putative sensory transducer protein YfmS (yfmS) from Bacillus subtilis (strain 168).